A 172-amino-acid chain; its full sequence is Regulator of hemoglobinization and erythroid cell expansion protein (172 aa).

A helical membrane pass occupies residues 9–29; sequence WHGLVIAVVSLFLQACFLTAI. The segment at 52 to 106 is disordered; the sequence is VPRPSPGHHHPPAVKEMKETQTERDIPMSDSLYRHDSDTPSDSLDSSCSSPPACQ. Residues 64-89 show a composition bias toward basic and acidic residues; it reads AVKEMKETQTERDIPMSDSLYRHDSD. Positions 91–103 are enriched in low complexity; that stretch reads PSDSLDSSCSSPP. Residues Tyr132 and Tyr141 each carry the phosphotyrosine modification.

In terms of assembly, interacts with EPOR; this interaction occurs in a erythropoietin (EPO)-dependent manner. Interacts with JAK2; this interaction occurs in a erythropoietin (EPO)-dependent manner. Interacts (via tyrosine-phosphorylated form) with GRB2. Phosphorylated. Phosphorylation on Tyr-132 and Tyr-141 occurs in a erythropoietin (EPO)-dependent manner. In terms of tissue distribution, expressed in the proerythroblasts (at protein level). Expressed strongly in the kidney. Expressed weakly in the pancreas, liver and lung. Expressed strongly in erythroid progenitor cells (EPCs). Expressed weakly in T-cells and neutrophils.

It localises to the cell membrane. Its function is as follows. Acts as a signaling transduction factor of the EPO-EPOR signaling pathway promoting erythroid cell differentiation. The chain is Regulator of hemoglobinization and erythroid cell expansion protein from Homo sapiens (Human).